Consider the following 388-residue polypeptide: Succinyl-diaminopimelate desuccinylase (388 aa).

Residue H74 coordinates Zn(2+). D76 is a catalytic residue. D107 provides a ligand contact to Zn(2+). E142 (proton acceptor) is an active-site residue. 3 residues coordinate Zn(2+): E143, E171, and H360.

This sequence belongs to the peptidase M20A family. DapE subfamily. In terms of assembly, homodimer. Zn(2+) serves as cofactor. It depends on Co(2+) as a cofactor.

The enzyme catalyses N-succinyl-(2S,6S)-2,6-diaminopimelate + H2O = (2S,6S)-2,6-diaminopimelate + succinate. It functions in the pathway amino-acid biosynthesis; L-lysine biosynthesis via DAP pathway; LL-2,6-diaminopimelate from (S)-tetrahydrodipicolinate (succinylase route): step 3/3. Catalyzes the hydrolysis of N-succinyl-L,L-diaminopimelic acid (SDAP), forming succinate and LL-2,6-diaminopimelate (DAP), an intermediate involved in the bacterial biosynthesis of lysine and meso-diaminopimelic acid, an essential component of bacterial cell walls. The sequence is that of Succinyl-diaminopimelate desuccinylase from Rhodopseudomonas palustris (strain BisB5).